The following is a 319-amino-acid chain: 4-hydroxy-3-methylbut-2-enyl diphosphate reductase (319 aa).

Residue Cys18 participates in [4Fe-4S] cluster binding. (2E)-4-hydroxy-3-methylbut-2-enyl diphosphate contacts are provided by His47 and His81. The dimethylallyl diphosphate site is built by His47 and His81. Positions 47 and 81 each coordinate isopentenyl diphosphate. Cys103 contacts [4Fe-4S] cluster. His131 is a (2E)-4-hydroxy-3-methylbut-2-enyl diphosphate binding site. Residue His131 coordinates dimethylallyl diphosphate. His131 serves as a coordination point for isopentenyl diphosphate. The Proton donor role is filled by Glu133. Residue Thr172 participates in (2E)-4-hydroxy-3-methylbut-2-enyl diphosphate binding. Position 202 (Cys202) interacts with [4Fe-4S] cluster. Residues Ser230, Ser231, Asn232, and Ser275 each coordinate (2E)-4-hydroxy-3-methylbut-2-enyl diphosphate. 4 residues coordinate dimethylallyl diphosphate: Ser230, Ser231, Asn232, and Ser275. Isopentenyl diphosphate is bound by residues Ser230, Ser231, Asn232, and Ser275.

This sequence belongs to the IspH family. Requires [4Fe-4S] cluster as cofactor.

The catalysed reaction is isopentenyl diphosphate + 2 oxidized [2Fe-2S]-[ferredoxin] + H2O = (2E)-4-hydroxy-3-methylbut-2-enyl diphosphate + 2 reduced [2Fe-2S]-[ferredoxin] + 2 H(+). The enzyme catalyses dimethylallyl diphosphate + 2 oxidized [2Fe-2S]-[ferredoxin] + H2O = (2E)-4-hydroxy-3-methylbut-2-enyl diphosphate + 2 reduced [2Fe-2S]-[ferredoxin] + 2 H(+). Its pathway is isoprenoid biosynthesis; dimethylallyl diphosphate biosynthesis; dimethylallyl diphosphate from (2E)-4-hydroxy-3-methylbutenyl diphosphate: step 1/1. The protein operates within isoprenoid biosynthesis; isopentenyl diphosphate biosynthesis via DXP pathway; isopentenyl diphosphate from 1-deoxy-D-xylulose 5-phosphate: step 6/6. Its function is as follows. Catalyzes the conversion of 1-hydroxy-2-methyl-2-(E)-butenyl 4-diphosphate (HMBPP) into a mixture of isopentenyl diphosphate (IPP) and dimethylallyl diphosphate (DMAPP). Acts in the terminal step of the DOXP/MEP pathway for isoprenoid precursor biosynthesis. The chain is 4-hydroxy-3-methylbut-2-enyl diphosphate reductase from Beijerinckia indica subsp. indica (strain ATCC 9039 / DSM 1715 / NCIMB 8712).